The following is a 259-amino-acid chain: Hydroxyacylglutathione hydrolase (259 aa).

Residues His-56, His-58, Asp-60, His-61, His-112, Asp-133, and His-171 each contribute to the Zn(2+) site.

The protein belongs to the metallo-beta-lactamase superfamily. Glyoxalase II family. As to quaternary structure, monomer. Requires Zn(2+) as cofactor.

It catalyses the reaction an S-(2-hydroxyacyl)glutathione + H2O = a 2-hydroxy carboxylate + glutathione + H(+). Its pathway is secondary metabolite metabolism; methylglyoxal degradation; (R)-lactate from methylglyoxal: step 2/2. Its function is as follows. Thiolesterase that catalyzes the hydrolysis of S-D-lactoyl-glutathione to form glutathione and D-lactic acid. The chain is Hydroxyacylglutathione hydrolase from Pseudomonas putida (strain W619).